A 486-amino-acid chain; its full sequence is Ribulose bisphosphate carboxylase large chain 1 (486 aa).

Substrate contacts are provided by asparagine 125 and threonine 175. Lysine 177 serves as the catalytic Proton acceptor. Lysine 179 provides a ligand contact to substrate. Positions 203, 205, and 206 each coordinate Mg(2+). Lysine 203 is subject to N6-carboxylysine. Residue histidine 295 is the Proton acceptor of the active site. Substrate is bound by residues arginine 296, histidine 328, and serine 380.

This sequence belongs to the RuBisCO large chain family. Type I subfamily. Heterohexadecamer of 8 large chains and 8 small chains. Requires Mg(2+) as cofactor.

It catalyses the reaction 2 (2R)-3-phosphoglycerate + 2 H(+) = D-ribulose 1,5-bisphosphate + CO2 + H2O. The enzyme catalyses D-ribulose 1,5-bisphosphate + O2 = 2-phosphoglycolate + (2R)-3-phosphoglycerate + 2 H(+). RuBisCO catalyzes two reactions: the carboxylation of D-ribulose 1,5-bisphosphate, the primary event in carbon dioxide fixation, as well as the oxidative fragmentation of the pentose substrate. Both reactions occur simultaneously and in competition at the same active site. The sequence is that of Ribulose bisphosphate carboxylase large chain 1 from Bradyrhizobium sp. (strain ORS 278).